The chain runs to 261 residues: Small ribosomal subunit protein eS1 (261 aa).

Positions 1–18 are enriched in basic residues; it reads MAVGKNKRISKGKKGGKK. Positions 1–23 are disordered; that stretch reads MAVGKNKRISKGKKGGKKKAADP.

Belongs to the eukaryotic ribosomal protein eS1 family. As to quaternary structure, component of the small ribosomal subunit. Mature ribosomes consist of a small (40S) and a large (60S) subunit. The 40S subunit contains about 33 different proteins and 1 molecule of RNA (18S). The 60S subunit contains about 49 different proteins and 3 molecules of RNA (25S, 5.8S and 5S).

The protein localises to the cytoplasm. This is Small ribosomal subunit protein eS1 (cyc07) from Nicotiana tabacum (Common tobacco).